The sequence spans 594 residues: UvrABC system protein C (594 aa).

The 87-residue stretch at 13-99 (SSSGVYQYFD…IKQLKPKYNI (87 aa)) folds into the GIY-YIG domain. In terms of domain architecture, UVR spans 205-240 (DRLIKELELKMERLSSNLRFEEALIYRDRIAKIQKI).

The protein belongs to the UvrC family. As to quaternary structure, interacts with UvrB in an incision complex.

It is found in the cytoplasm. Its function is as follows. The UvrABC repair system catalyzes the recognition and processing of DNA lesions. UvrC both incises the 5' and 3' sides of the lesion. The N-terminal half is responsible for the 3' incision and the C-terminal half is responsible for the 5' incision. The chain is UvrABC system protein C from Helicobacter pylori (strain J99 / ATCC 700824) (Campylobacter pylori J99).